The following is a 130-amino-acid chain: Small ribosomal subunit protein uS9 (130 aa).

This sequence belongs to the universal ribosomal protein uS9 family.

This is Small ribosomal subunit protein uS9 from Halalkalibacterium halodurans (strain ATCC BAA-125 / DSM 18197 / FERM 7344 / JCM 9153 / C-125) (Bacillus halodurans).